We begin with the raw amino-acid sequence, 60 residues long: Large ribosomal subunit protein uL30 (60 aa).

The protein belongs to the universal ribosomal protein uL30 family. In terms of assembly, part of the 50S ribosomal subunit.

The sequence is that of Large ribosomal subunit protein uL30 from Leuconostoc citreum (strain KM20).